Reading from the N-terminus, the 162-residue chain is Large ribosomal subunit protein uL15 (162 aa).

The segment covering 1-13 (MNLNELRDNEGSR) has biased composition (basic and acidic residues). The segment at 1 to 39 (MNLNELRDNEGSRYRKKRLGRGIGSGKGKTSGRGVKGQK) is disordered. The segment covering 21 to 35 (RGIGSGKGKTSGRGV) has biased composition (gly residues).

The protein belongs to the universal ribosomal protein uL15 family. In terms of assembly, part of the 50S ribosomal subunit.

Its function is as follows. Binds to the 23S rRNA. The polypeptide is Large ribosomal subunit protein uL15 (Gluconobacter oxydans (strain 621H) (Gluconobacter suboxydans)).